The sequence spans 408 residues: Homogentisate geranylgeranyltransferase (408 aa).

The N-terminal 68 residues, 1-68 (MQATTAAAAA…SAISQATSPR (68 aa)), are a transit peptide targeting the chloroplast. Transmembrane regions (helical) follow at residues 122–142 (HTIFGTIIGITSVSLLPMKSI), 149–169 (VLKGYLEALAAALCMNIYVVG), 194–214 (SVATGVFLVVTFLIMSFSIGI), 217–237 (GSVPLMYALVVSFLLGSAYSI), 248–268 (ALLAASCILFVRAILVQLAFF), 286–306 (LVFATLFMCCFSAVIALFKDI), 329–349 (VYQLCISILLTAYLAATVVGA), 352–372 (THLLQKIITVSGHGLLALTLW), and 386–406 (VTSFYMFIWKLFYAEYFLIPF).

It belongs to the UbiA prenyltransferase family.

The protein resides in the plastid. Its subcellular location is the chloroplast membrane. It carries out the reaction homogentisate + (2E,6E,10E)-geranylgeranyl diphosphate + H(+) = 6-geranylgeranyl-2-methylbenzene-1,4-diol + CO2 + diphosphate. The protein operates within cofactor biosynthesis; tocopherol biosynthesis. In terms of biological role, involved in the synthesis of tocotrienol (vitamin E). Catalyzes the condensation of homogentisate and geranylgeranyl diphosphate to form 2-methyl-6-geranylgeranylbenzoquinol. Possesses low activity with phytyl diphosphate as substrate. The chain is Homogentisate geranylgeranyltransferase from Triticum aestivum (Wheat).